A 223-amino-acid polypeptide reads, in one-letter code: Small ribosomal subunit protein uS5 (223 aa).

Positions 1 to 48 (MPGRQRRDGGSGPAGQNGPNSGDNSNARGDNRGGGRDRRDGGRGGNAA) are disordered. The segment covering 29-42 (GDNRGGGRDRRDGG) has biased composition (basic and acidic residues). The 64-residue stretch at 53 to 116 (FIERVVTINR…EEARKSFFRV (64 aa)) folds into the S5 DRBM domain.

This sequence belongs to the universal ribosomal protein uS5 family. As to quaternary structure, part of the 30S ribosomal subunit. Contacts proteins S4 and S8.

Its function is as follows. With S4 and S12 plays an important role in translational accuracy. Located at the back of the 30S subunit body where it stabilizes the conformation of the head with respect to the body. This chain is Small ribosomal subunit protein uS5, found in Rhodococcus erythropolis (strain PR4 / NBRC 100887).